The chain runs to 143 residues: Hemoglobin subunit alpha-2 (143 aa).

Ser2 carries the N-acetylserine modification. One can recognise a Globin domain in the interval 2-143 (SLSSKQKATV…LALALAEKYR (142 aa)). An O2-binding site is contributed by His60. His89 contributes to the heme b binding site.

This sequence belongs to the globin family. In terms of assembly, hb 2 is a heterotetramer of two alpha-2 and two beta-2 chains. As to expression, red blood cells.

Its function is as follows. Involved in oxygen transport from gills to the various peripheral tissues. The sequence is that of Hemoglobin subunit alpha-2 (hba2) from Gadus morhua (Atlantic cod).